Here is a 100-residue protein sequence, read N- to C-terminus: NADH-quinone oxidoreductase subunit K (100 aa).

A run of 3 helical transmembrane segments spans residues 4–24, 28–48, and 60–80; these read LQHGLILAAVLFVLGFTCLVL, LLFMLIGLEIMINSAALAFVV, and IMYILAISLAAAEASIGLALL.

Belongs to the complex I subunit 4L family. In terms of assembly, NDH-1 is composed of 13 different subunits. Subunits NuoA, H, J, K, L, M, N constitute the membrane sector of the complex.

The protein resides in the cell inner membrane. The enzyme catalyses a quinone + NADH + 5 H(+)(in) = a quinol + NAD(+) + 4 H(+)(out). Functionally, NDH-1 shuttles electrons from NADH, via FMN and iron-sulfur (Fe-S) centers, to quinones in the respiratory chain. The immediate electron acceptor for the enzyme in this species is believed to be ubiquinone. Couples the redox reaction to proton translocation (for every two electrons transferred, four hydrogen ions are translocated across the cytoplasmic membrane), and thus conserves the redox energy in a proton gradient. This is NADH-quinone oxidoreductase subunit K from Proteus mirabilis (strain HI4320).